The primary structure comprises 163 residues: Nucleotide-binding protein Mvan_0997 (163 aa).

The protein belongs to the YajQ family.

Its function is as follows. Nucleotide-binding protein. This chain is Nucleotide-binding protein Mvan_0997, found in Mycolicibacterium vanbaalenii (strain DSM 7251 / JCM 13017 / BCRC 16820 / KCTC 9966 / NRRL B-24157 / PYR-1) (Mycobacterium vanbaalenii).